Reading from the N-terminus, the 76-residue chain is UPF0352 protein PC1_1633 (76 aa).

The protein belongs to the UPF0352 family.

This is UPF0352 protein PC1_1633 from Pectobacterium carotovorum subsp. carotovorum (strain PC1).